The primary structure comprises 345 residues: NADH-quinone oxidoreductase subunit H (345 aa).

A run of 8 helical transmembrane segments spans residues 9–29 (ALGA…LVFA), 82–102 (VVMV…EGVV), 108–128 (VGVI…TLAG), 154–174 (MGLA…MEIV), 183–203 (LLGW…VTAF), 241–261 (YVNW…GYLV), 282–302 (LLQF…FIWV), and 325–345 (IALA…AVGL).

The protein belongs to the complex I subunit 1 family. In terms of assembly, NDH-1 is composed of 14 different subunits. Subunits NuoA, H, J, K, L, M, N constitute the membrane sector of the complex.

It is found in the cell inner membrane. It carries out the reaction a quinone + NADH + 5 H(+)(in) = a quinol + NAD(+) + 4 H(+)(out). In terms of biological role, NDH-1 shuttles electrons from NADH, via FMN and iron-sulfur (Fe-S) centers, to quinones in the respiratory chain. The immediate electron acceptor for the enzyme in this species is believed to be ubiquinone. Couples the redox reaction to proton translocation (for every two electrons transferred, four hydrogen ions are translocated across the cytoplasmic membrane), and thus conserves the redox energy in a proton gradient. This subunit may bind ubiquinone. The protein is NADH-quinone oxidoreductase subunit H of Salinibacter ruber (strain DSM 13855 / M31).